Here is a 1816-residue protein sequence, read N- to C-terminus: Laminin subunit alpha-4 (1816 aa).

Positions 1–24 are cleaved as a signal peptide; that stretch reads MGWSTAWCSVLALWLLWCAVCSNA. Ser39 carries O-linked (Xyl...) (chondroitin sulfate) serine glycosylation. 12 disulfide bridges follow: Cys82–Cys91, Cys84–Cys98, Cys101–Cys110, Cys113–Cys129, Cys132–Cys146, Cys134–Cys155, Cys157–Cys166, Cys169–Cys184, Cys187–Cys202, Cys189–Cys209, Cys212–Cys221, and Cys224–Cys238. Laminin EGF-like domains are found at residues 82–131, 132–186, and 187–240; these read CDCN…FCQP, CPCP…TCKK, and CDCS…NCAV. Asn104 carries an N-linked (GlcNAc...) asparagine glycan. The N-linked (GlcNAc...) asparagine glycan is linked to Asn215. The 15-residue stretch at 241–255 folds into the Laminin EGF-like 4; truncated domain; that stretch reads CNCGGGPCDSVTGEC. The domain II and I stretch occupies residues 256-825; sequence LEEGFEVPTG…AQTRSVASKI (570 aa). N-linked (GlcNAc...) asparagine glycans are attached at residues Asn308, Asn333, Asn458, Asn550, Asn571, Asn574, Asn631, and Asn639. The stretch at 431–523 forms a coiled coil; sequence THRELVDEEA…ERVKEQMEVV (93 aa). Positions 556–604 form a coiled coil; that stretch reads AEIDGAKNELQGKLSNLSNLSHDLVQEATDHAYNLQQEADELSRNLHSS. Residues 655-717 adopt a coiled-coil conformation; it reads IIYHKDESDN…AVKQLQAAER (63 aa). Positions 717–719 match the Cell attachment site motif; the sequence is RGD. Asn735, Asn751, Asn754, Asn780, and Asn803 each carry an N-linked (GlcNAc...) asparagine glycan. A coiled-coil region spans residues 770 to 799; it reads AVDSARDAVRNLTEVVPQLLDQLRTVEQKR. Laminin G-like domains are found at residues 826 to 1030, 1042 to 1222, and 1229 to 1397; these read QVSM…SVPC, AASY…GYGC, and SRRA…LYEC. The cysteines at positions 1000 and 1030 are disulfide-linked. The N-linked (GlcNAc...) asparagine glycan is linked to Asn1088. Residues Cys1196 and Cys1222 are joined by a disulfide bond. Residues Asn1283 and Asn1361 are each glycosylated (N-linked (GlcNAc...) asparagine). Cys1365 and Cys1397 are disulfide-bonded. A compositionally biased stretch (basic residues) spans 1409–1419; the sequence is KKGKNSSKPKT. Positions 1409–1433 are disordered; it reads KKGKNSSKPKTNKQGEKSKDAPSWD. The span at 1421-1430 shows a compositional bias: basic and acidic residues; that stretch reads KQGEKSKDAP. 2 consecutive Laminin G-like domains span residues 1462–1633 and 1640–1813; these read AYQY…VTPC and TGTY…INSC. 2 disulfide bridges follow: Cys1610-Cys1633 and Cys1785-Cys1813.

As to quaternary structure, laminin is a complex glycoprotein, consisting of three different polypeptide chains (alpha, beta, gamma), which are bound to each other by disulfide bonds into a cross-shaped molecule comprising one long and three short arms with globules at each end. Alpha-4 is a subunit of laminin-8 (laminin-411), laminin-9 (laminin-421) and laminin-14 (laminin-423). As to expression, strongly expressed in peripheral nerves, cardiac muscle, fat, dermis, lung stroma, aortic endothelium, endocardium and endothelium of blood vessels in skin and brain.

It is found in the secreted. The protein resides in the extracellular space. Its subcellular location is the extracellular matrix. The protein localises to the basement membrane. In terms of biological role, binding to cells via a high affinity receptor, laminin is thought to mediate the attachment, migration and organization of cells into tissues during embryonic development by interacting with other extracellular matrix components. The sequence is that of Laminin subunit alpha-4 (Lama4) from Mus musculus (Mouse).